The chain runs to 125 residues: SOSS complex subunit C homolog A (125 aa).

The segment covering 1-16 has biased composition (polar residues); it reads MAFPNTSAQQAETNSK. Disordered regions lie at residues 1–20, 38–74, and 105–125; these read MAFP…SLEE, SNTN…AAFN, and PATP…NNPK.

Belongs to the SOSS-C family.

In Drosophila willistoni (Fruit fly), this protein is SOSS complex subunit C homolog A.